The primary structure comprises 346 residues: Elongation factor Ts (346 aa).

The interval 80–83 (TDFV) is involved in Mg(2+) ion dislocation from EF-Tu.

It belongs to the EF-Ts family.

The protein localises to the cytoplasm. Functionally, associates with the EF-Tu.GDP complex and induces the exchange of GDP to GTP. It remains bound to the aminoacyl-tRNA.EF-Tu.GTP complex up to the GTP hydrolysis stage on the ribosome. The protein is Elongation factor Ts of Streptococcus pyogenes serotype M3 (strain ATCC BAA-595 / MGAS315).